Here is an 88-residue protein sequence, read N- to C-terminus: Small ribosomal subunit protein uS17 (88 aa).

It belongs to the universal ribosomal protein uS17 family. As to quaternary structure, part of the 30S ribosomal subunit.

Functionally, one of the primary rRNA binding proteins, it binds specifically to the 5'-end of 16S ribosomal RNA. The sequence is that of Small ribosomal subunit protein uS17 from Syntrophotalea carbinolica (strain DSM 2380 / NBRC 103641 / GraBd1) (Pelobacter carbinolicus).